We begin with the raw amino-acid sequence, 361 residues long: MNKGNTLDSIPTDLILEIFSRLSAKSVGRLRCLSKLWRKGEWFFFSSLQPQNLYEKPFLVVAADFHMKFSEDMSHDIYSYASGLIYFPKMLIENEKSGAIRVICNPITGQYAILPKLITLQAARSFLGFDPIDNQFKVLLVNNDIVNNDMDILTLGIGELMSEKLKFIEAKCFFALDDVQLINYKGKLGGISWNNHEVAPVELSMWVLEDVEKQEWSKNVYILPKNVVPNNWLHAAGVTVEGDIVFSEAVVSNPFDVFYFNPEKNTLQHVETHCNHEVFDDENLVNIFVDHVEDLKFDVMKPTYAATSIRPTEQKHKPTSTETSMSRKDHQVRTIDQPQQDRCTFESINNKFDVMCLLDDD.

Residues Gly-4–Pro-50 form the F-box domain. The interval Ser-308 to Gln-339 is disordered.

The polypeptide is Putative F-box protein At1g33010 (Arabidopsis thaliana (Mouse-ear cress)).